The primary structure comprises 398 residues: Acetate kinase (398 aa).

Asn-8 serves as a coordination point for Mg(2+). Position 15 (Lys-15) interacts with ATP. Arg-89 serves as a coordination point for substrate. Residue Asp-146 is the Proton donor/acceptor of the active site. Residues 206–210 (HIGNG), 283–285 (DMR), and 331–335 (GMGEN) each bind ATP. Position 383 (Glu-383) interacts with Mg(2+).

The protein belongs to the acetokinase family. Homodimer. Mg(2+) is required as a cofactor. The cofactor is Mn(2+).

The protein localises to the cytoplasm. The catalysed reaction is acetate + ATP = acetyl phosphate + ADP. Its pathway is metabolic intermediate biosynthesis; acetyl-CoA biosynthesis; acetyl-CoA from acetate: step 1/2. Its function is as follows. Catalyzes the formation of acetyl phosphate from acetate and ATP. Can also catalyze the reverse reaction. The polypeptide is Acetate kinase (Streptococcus pyogenes serotype M4 (strain MGAS10750)).